The chain runs to 210 residues: Large ribosomal subunit protein uL4 (210 aa).

It belongs to the universal ribosomal protein uL4 family. Part of the 50S ribosomal subunit.

Functionally, one of the primary rRNA binding proteins, this protein initially binds near the 5'-end of the 23S rRNA. It is important during the early stages of 50S assembly. It makes multiple contacts with different domains of the 23S rRNA in the assembled 50S subunit and ribosome. In terms of biological role, forms part of the polypeptide exit tunnel. The protein is Large ribosomal subunit protein uL4 (rplD) of Thermus thermophilus.